We begin with the raw amino-acid sequence, 494 residues long: Cytochrome P450 monooxygenase acrF (494 aa).

Cys420 is a binding site for heme.

This sequence belongs to the cytochrome P450 family. Heme is required as a cofactor.

The protein operates within secondary metabolite biosynthesis. Functionally, cytochrome P450 monooxygenase; part of the cluster that mediates the biosynthesis of acurin A, a highly reduced polyketide coupled to a serine via a peptide bond. The activities of the highly reducing polyketide synthase acrA and the nonribosomal peptide synthetase acrB are collectively responsible for the synthesis of the acurin A core structure with a heptaketide backbone produced by acrA covalently fused to a L-serine by acrB. After the formation of the PK-NRP hybrid product, it is detached from acrB by reductive release to set up the formation of the lactam ring by aldol condensation. The hydrolyase acrC then catalyzes water loss to generate a double bond in the ring. This double bond is probably reduced, which is followed by three oxidations at C-22 to generate the carboxylic acid moiety, involving probably the FAD-binding monooxygenase acrE and the cytochrome P450 monooxygenases acrD and acrF. Finally, a last methylation step performed by the O-methyltransferase acrG leads to the production of acurin A. This is Cytochrome P450 monooxygenase acrF from Aspergillus aculeatus (strain ATCC 16872 / CBS 172.66 / WB 5094).